The chain runs to 249 residues: NADH dehydrogenase [ubiquinone] flavoprotein 2, mitochondrial (249 aa).

Residues 1-32 constitute a mitochondrion transit peptide; it reads MFFSAALRARAAGLTAQWGRHVRNLHKTAMQN. Residue Lys61 is modified to N6-acetyllysine. Positions 135, 140, 176, and 180 each coordinate [2Fe-2S] cluster. Residue Tyr193 is modified to Phosphotyrosine; by SRC. The tract at residues 213-249 is disordered; that stretch reads IPKPGPRSGRFSCEPAGGLTSLTEPPKGPGFGVQAGL.

The protein belongs to the complex I 24 kDa subunit family. As to quaternary structure, core subunit of respiratory chain NADH dehydrogenase (Complex I) which is composed of 45 different subunits. This is a component of the flavoprotein-sulfur (FP) fragment of the enzyme. It depends on [2Fe-2S] cluster as a cofactor.

The protein resides in the mitochondrion inner membrane. It catalyses the reaction a ubiquinone + NADH + 5 H(+)(in) = a ubiquinol + NAD(+) + 4 H(+)(out). Functionally, core subunit of the mitochondrial membrane respiratory chain NADH dehydrogenase (Complex I) which catalyzes electron transfer from NADH through the respiratory chain, using ubiquinone as an electron acceptor. Parts of the peripheral arm of the enzyme, where the electrons from NADH are accepted by flavin mononucleotide (FMN) and then passed along a chain of iron-sulfur clusters by electron tunnelling to the final acceptor ubiquinone. Contains one iron-sulfur cluster. The sequence is that of NADH dehydrogenase [ubiquinone] flavoprotein 2, mitochondrial from Gorilla gorilla gorilla (Western lowland gorilla).